Consider the following 160-residue polypeptide: MAFTFAAFCYMLTLVLCASLIFFVIWHIIAFDELRTDFKNPIDQGNPARARERLKNIERICCLLRKLVVPEYSIHGLFCLMFLCAAEWVTLGLNIPLLFYHLWRYFHRPADGSEVMYDAVSIMNADILNYCQKESWCKLAFYLLSFFYYLYSMVYTLVSF.

Topologically, residues 1–10 (MAFTFAAFCY) are cytoplasmic. A helical membrane pass occupies residues 11 to 31 (MLTLVLCASLIFFVIWHIIAF). Topologically, residues 32-72 (DELRTDFKNPIDQGNPARARERLKNIERICCLLRKLVVPEY) are lumenal. The chain crosses the membrane as a helical span at residues 73-93 (SIHGLFCLMFLCAAEWVTLGL). The Cytoplasmic segment spans residues 94–138 (NIPLLFYHLWRYFHRPADGSEVMYDAVSIMNADILNYCQKESWCK). The chain crosses the membrane as a helical span at residues 139-159 (LAFYLLSFFYYLYSMVYTLVS). Position 160 (Phe160) is a topological domain, lumenal.

The protein belongs to the cornichon family. In terms of assembly, acts as an auxiliary subunit for AMPA-selective glutamate receptors (AMPARs). Found in a complex with GRIA1, GRIA2, GRIA3, GRIA4, CNIH3, CACNG2, CACNG3, CACNG4, CACNG5, CACNG7 and CACNG8. Interacts with CACGN8. Interacts with GRIA1. Found in a complex with GRIA1, GRIA2, GRIA3, GRIA4, DLG4 and CACNG8. In terms of tissue distribution, expression is up-regulated in dorsolateral prefrontal cortex of patients with schizophrenia (postmortem brain study).

Its subcellular location is the endoplasmic reticulum membrane. The protein resides in the postsynaptic cell membrane. It is found in the cell projection. It localises to the dendrite. The protein localises to the dendritic spine. Its subcellular location is the postsynaptic density. Its function is as follows. Regulates the trafficking and gating properties of AMPA-selective glutamate receptors (AMPARs). Promotes their targeting to the cell membrane and synapses and modulates their gating properties by regulating their rates of activation, deactivation and desensitization. Blocks CACNG8-mediated resensitization of AMPA receptors. The polypeptide is Protein cornichon homolog 2 (Homo sapiens (Human)).